The following is a 121-amino-acid chain: Ribonuclease P protein component (121 aa).

Belongs to the RnpA family. Consists of a catalytic RNA component (M1 or rnpB) and a protein subunit.

The catalysed reaction is Endonucleolytic cleavage of RNA, removing 5'-extranucleotides from tRNA precursor.. Functionally, RNaseP catalyzes the removal of the 5'-leader sequence from pre-tRNA to produce the mature 5'-terminus. It can also cleave other RNA substrates such as 4.5S RNA. The protein component plays an auxiliary but essential role in vivo by binding to the 5'-leader sequence and broadening the substrate specificity of the ribozyme. In Desulfosudis oleivorans (strain DSM 6200 / JCM 39069 / Hxd3) (Desulfococcus oleovorans), this protein is Ribonuclease P protein component.